Here is a 515-residue protein sequence, read N- to C-terminus: Anthranilate synthase component 1 (515 aa).

L-tryptophan-binding positions include S50 and 281–283 (PYM). Chorismate is bound at residue 316–317 (GT). Residue E343 coordinates Mg(2+). Chorismate is bound by residues Y431, R451, 465–467 (GAG), and G467. E480 serves as a coordination point for Mg(2+).

This sequence belongs to the anthranilate synthase component I family. Heterotetramer consisting of two non-identical subunits: a beta subunit (TrpG) and a large alpha subunit (TrpE). Mg(2+) is required as a cofactor.

It catalyses the reaction chorismate + L-glutamine = anthranilate + pyruvate + L-glutamate + H(+). The protein operates within amino-acid biosynthesis; L-tryptophan biosynthesis; L-tryptophan from chorismate: step 1/5. Its activity is regulated as follows. Feedback inhibited by tryptophan. In terms of biological role, part of a heterotetrameric complex that catalyzes the two-step biosynthesis of anthranilate, an intermediate in the biosynthesis of L-tryptophan. In the first step, the glutamine-binding beta subunit (TrpG) of anthranilate synthase (AS) provides the glutamine amidotransferase activity which generates ammonia as a substrate that, along with chorismate, is used in the second step, catalyzed by the large alpha subunit of AS (TrpE) to produce anthranilate. In the absence of TrpG, TrpE can synthesize anthranilate directly from chorismate and high concentrations of ammonia. The chain is Anthranilate synthase component 1 (trpE) from Bacillus subtilis (strain 168).